Here is a 633-residue protein sequence, read N- to C-terminus: Chitin synthase regulatory factor 4 (633 aa).

The disordered stretch occupies residues 121 to 151 (ATSSQETKRDRPLPNIRNSAPSATRSHSTPC). The span at 136 to 149 (IRNSAPSATRSHST) shows a compositional bias: polar residues. S148 carries the post-translational modification Phosphoserine. Sel1-like repeat units follow at residues 278-314 (AKAMYFDAYVYETGAFDVESDIQRAWDLYSSSANLGY), 315-346 (TRSLYRLGVLLEDQGNLEEAVEYFEKGVSEND), 438-474 (SSAQLRMGAVYEFGKYGCPVVPRYSLFYYSAAAKRGE), 475-511 (TEADLAVAKWYLNGSDGIPVDEDLAFMHAERASMAGN), and 512-543 (ANAQFLMGYLFDTRGNTEQATYWYNEAAKAGH). The tract at residues 583–613 (ASETSPPHAPAVSSTPVTSAPPVSQTKVTKV) is disordered. Positions 592–613 (PAVSSTPVTSAPPVSQTKVTKV) are enriched in low complexity.

The protein resides in the cytoplasm. In terms of biological role, involved in septum formation. Required for the proper localization of chs2 at the septum. The protein is Chitin synthase regulatory factor 4 (chr4) of Schizosaccharomyces pombe (strain 972 / ATCC 24843) (Fission yeast).